The sequence spans 631 residues: Sphingomyelin phosphodiesterase (631 aa).

Residues 1-23 (MPRYGASLRQSCPRSGREQGQDG) are disordered. The first 46 residues, 1–46 (MPRYGASLRQSCPRSGREQGQDGTAGAPGLLWMGLVLALALALALA), serve as a signal peptide directing secretion. In terms of domain architecture, Saposin B-type spans 87-171 (GNLTCPICKG…LLGSTCGHWD (85 aa)). Asn-88 is a glycosylation site (N-linked (GlcNAc...) asparagine). 3 disulfides stabilise this stretch: Cys-91-Cys-167, Cys-94-Cys-159, and Cys-122-Cys-133. The N-linked (GlcNAc...) asparagine glycan is linked to Asn-177. Zn(2+) is bound by residues Asp-208 and His-210. Cystine bridges form between Cys-223–Cys-228 and Cys-229–Cys-252. Zn(2+)-binding residues include Asp-280 and Asn-320. Residues Asn-337 and Asn-397 are each glycosylated (N-linked (GlcNAc...) asparagine). Cysteines 387 and 433 form a disulfide. Zn(2+) is bound by residues His-427, His-459, and His-461. Asn-505 is a glycosylation site (N-linked (GlcNAc...) asparagine). Residue Ser-510 is modified to Phosphoserine; by PKC/PRKCD. The N-linked (GlcNAc...) asparagine glycan is linked to Asn-522. 2 disulfide bridges follow: Cys-586/Cys-590 and Cys-596/Cys-609.

This sequence belongs to the acid sphingomyelinase family. As to quaternary structure, monomer. Interacts with SORT1; the interaction is required for SMPD1 targeting to lysosomes. It depends on Zn(2+) as a cofactor. Proteolytically processed. Mature lysosomal form arises from C-terminal proteolytic processing of pro-sphingomyelin phosphodiesterase. In terms of processing, this form is generated following cleavage by CASP7 in the extracellular milieu. It shows increased activity. Post-translationally, both lysosomal and secreted forms are glycosylated but they show a differential pattern of glycosylation. Phosphorylated at Ser-510 by PRKCD upon stress stimuli. Phosphorylation is required for secretion.

The protein resides in the lysosome. It localises to the lipid droplet. It is found in the secreted. Its subcellular location is the extracellular space. The catalysed reaction is a sphingomyelin + H2O = phosphocholine + an N-acylsphing-4-enine + H(+). The enzyme catalyses N-(octadecanoyl)-sphing-4-enine-1-phosphocholine + H2O = N-octadecanoylsphing-4-enine + phosphocholine + H(+). It carries out the reaction 1,2-dihexadecanoyl-sn-glycero-3-phosphocholine + H2O = 1,2-dihexadecanoyl-sn-glycerol + phosphocholine + H(+). It catalyses the reaction a 1,2-diacyl-sn-glycero-3-phosphocholine + H2O = phosphocholine + a 1,2-diacyl-sn-glycerol + H(+). Hydrolysis of liposomal sphingomyelin is stimulated by incorporation of diacylglycerol (DAG), ceramide and free fatty acids into the liposomal membranes. Phosphatidylcholine hydrolysis is inhibited by incorporation of cholesterol, ceramide, DAG, monoacylglycerol and fatty acids. Antidepressants, namely amitriptyline, imipramine, desipramine, fluoxetine, sertraline, escitalopram, and maprotiline inhibit sphingomyelin phosphodiesterase activity. Its activity is regulated as follows. (Microbial infection) The secretory form is activated by P.aeruginosa, this activation results in the release of ceramide in the outer leaflet of the plasma membrane. With respect to regulation, (Microbial infection) The secretory form is activated by human coronavirus SARS-CoV-2, this activation results in the release of ceramide in the outer leaflet of the plasma membrane. Converts sphingomyelin to ceramide. Exists as two enzymatic forms that arise from alternative trafficking of a single protein precursor, one that is targeted to the endolysosomal compartment, whereas the other is released extracellularly. However, in response to various forms of stress, lysosomal exocytosis may represent a major source of the secretory form. Functionally, in the lysosomes, converts sphingomyelin to ceramide. Plays an important role in the export of cholesterol from the intraendolysosomal membranes. Also has phospholipase C activities toward 1,2-diacylglycerolphosphocholine and 1,2-diacylglycerolphosphoglycerol. Modulates stress-induced apoptosis through the production of ceramide. In terms of biological role, when secreted, modulates cell signaling with its ability to reorganize the plasma membrane by converting sphingomyelin to ceramide. Secreted form is increased in response to stress and inflammatory mediators such as IL1B, IFNG or TNF as well as upon infection with bacteria and viruses. Produces the release of ceramide in the outer leaflet of the plasma membrane playing a central role in host defense. Ceramide reorganizes these rafts into larger signaling platforms that are required to internalize P.aeruginosa, induce apoptosis and regulate the cytokine response in infected cells. In wounded cells, the lysosomal form is released extracellularly in the presence of Ca(2+) and promotes endocytosis and plasma membrane repair. Its function is as follows. This form is generated following cleavage by CASP7 in the extracellular milieu in response to bacterial infection. It shows increased ability to convert sphingomyelin to ceramide and promotes plasma membrane repair. Plasma membrane repair by ceramide counteracts the action of gasdermin-D (GSDMD) perforin (PRF1) pores that are formed in response to bacterial infection. (Microbial infection) Secretion is activated by bacteria such as P.aeruginosa, N.gonorrhoeae and others, this activation results in the release of ceramide in the outer leaflet of the plasma membrane which facilitates the infection. Functionally, (Microbial infection) Secretion is activated by human coronaviruses SARS-CoV and SARS-CoV-2 as well as Zaire ebolavirus, this activation results in the release of ceramide in the outer leaflet of the plasma membrane which facilitates the infection. In terms of biological role, lacks residues that bind the cofactor Zn(2+) and has no enzyme activity. The chain is Sphingomyelin phosphodiesterase from Homo sapiens (Human).